The following is a 252-amino-acid chain: Imidazole glycerol phosphate synthase subunit HisF (252 aa).

Catalysis depends on residues Asp11 and Asp130.

Belongs to the HisA/HisF family. Heterodimer of HisH and HisF.

Its subcellular location is the cytoplasm. The catalysed reaction is 5-[(5-phospho-1-deoxy-D-ribulos-1-ylimino)methylamino]-1-(5-phospho-beta-D-ribosyl)imidazole-4-carboxamide + L-glutamine = D-erythro-1-(imidazol-4-yl)glycerol 3-phosphate + 5-amino-1-(5-phospho-beta-D-ribosyl)imidazole-4-carboxamide + L-glutamate + H(+). Its pathway is amino-acid biosynthesis; L-histidine biosynthesis; L-histidine from 5-phospho-alpha-D-ribose 1-diphosphate: step 5/9. Functionally, IGPS catalyzes the conversion of PRFAR and glutamine to IGP, AICAR and glutamate. The HisF subunit catalyzes the cyclization activity that produces IGP and AICAR from PRFAR using the ammonia provided by the HisH subunit. In Moorella thermoacetica (strain ATCC 39073 / JCM 9320), this protein is Imidazole glycerol phosphate synthase subunit HisF.